A 96-amino-acid chain; its full sequence is Small ribosomal subunit protein bS6 (96 aa).

It belongs to the bacterial ribosomal protein bS6 family.

Binds together with bS18 to 16S ribosomal RNA. This is Small ribosomal subunit protein bS6 from Streptococcus pyogenes serotype M1.